Here is a 419-residue protein sequence, read N- to C-terminus: 3-phosphoshikimate 1-carboxyvinyltransferase (419 aa).

Residues lysine 21, serine 22, and arginine 26 each contribute to the 3-phosphoshikimate site. Residue lysine 21 coordinates phosphoenolpyruvate. Positions 91 and 119 each coordinate phosphoenolpyruvate. Positions 164, 165, 166, 191, 305, and 332 each coordinate 3-phosphoshikimate. Glutamine 166 contributes to the phosphoenolpyruvate binding site. Aspartate 305 serves as the catalytic Proton acceptor. 2 residues coordinate phosphoenolpyruvate: arginine 336 and arginine 376.

This sequence belongs to the EPSP synthase family. In terms of assembly, monomer.

It is found in the cytoplasm. The enzyme catalyses 3-phosphoshikimate + phosphoenolpyruvate = 5-O-(1-carboxyvinyl)-3-phosphoshikimate + phosphate. It functions in the pathway metabolic intermediate biosynthesis; chorismate biosynthesis. Its function is as follows. Catalyzes the transfer of the enolpyruvyl moiety of phosphoenolpyruvate (PEP) to the 5-hydroxyl of shikimate-3-phosphate (S3P) to produce enolpyruvyl shikimate-3-phosphate and inorganic phosphate. This chain is 3-phosphoshikimate 1-carboxyvinyltransferase, found in Methanothermobacter thermautotrophicus (strain ATCC 29096 / DSM 1053 / JCM 10044 / NBRC 100330 / Delta H) (Methanobacterium thermoautotrophicum).